We begin with the raw amino-acid sequence, 270 residues long: uncharacterized protein (270 aa).

The HTH lysR-type domain maps to 1-50; it reads LTEVVKAQSFTKAAENLYTSQPSISRDIKRLENDYDVKVFEFKHSKMTLT. A DNA-binding region (H-T-H motif) is located at residues 10–29; it reads FTKAAENLYTSQPSISRDIK.

Belongs to the LysR transcriptional regulatory family.

This is an uncharacterized protein from Staphylococcus xylosus.